The following is a 410-amino-acid chain: LL-diaminopimelate aminotransferase (410 aa).

Residues Tyr-15 and Gly-42 each contribute to the substrate site. Pyridoxal 5'-phosphate-binding positions include Tyr-72, Ala-108–Lys-109, Tyr-132, Asn-188, Tyr-219, and Ser-247–Ser-249. Residues Lys-109, Tyr-132, and Asn-188 each coordinate substrate. An N6-(pyridoxal phosphate)lysine modification is found at Lys-250. Pyridoxal 5'-phosphate is bound by residues Arg-258 and Asn-293. Substrate contacts are provided by Asn-293 and Arg-389.

This sequence belongs to the class-I pyridoxal-phosphate-dependent aminotransferase family. LL-diaminopimelate aminotransferase subfamily. Homodimer. Pyridoxal 5'-phosphate serves as cofactor.

The enzyme catalyses (2S,6S)-2,6-diaminopimelate + 2-oxoglutarate = (S)-2,3,4,5-tetrahydrodipicolinate + L-glutamate + H2O + H(+). Its pathway is amino-acid biosynthesis; L-lysine biosynthesis via DAP pathway; LL-2,6-diaminopimelate from (S)-tetrahydrodipicolinate (aminotransferase route): step 1/1. Its function is as follows. Involved in the synthesis of meso-diaminopimelate (m-DAP or DL-DAP), required for both lysine and peptidoglycan biosynthesis. Catalyzes the direct conversion of tetrahydrodipicolinate to LL-diaminopimelate. The polypeptide is LL-diaminopimelate aminotransferase (Bacteroides thetaiotaomicron (strain ATCC 29148 / DSM 2079 / JCM 5827 / CCUG 10774 / NCTC 10582 / VPI-5482 / E50)).